We begin with the raw amino-acid sequence, 874 residues long: Bifunctional apolipoprotein N-acyltransferase/polyprenol monophosphomannose synthase (874 aa).

An apolipoprotein N-acyltransferase region spans residues M1–Y593. Transmembrane regions (helical) follow at residues T23–R42, Y72–G89, P94–A115, V177–W194, and A206–V223. The CN hydrolase domain maps to V241–L497. The active-site Proton acceptor is E294. K359 is a catalytic residue. The active-site Nucleophile is C409. Residues P509–A526 traverse the membrane as a helical segment. Disordered regions lie at residues F533–S609 and R852–E874. Residues M594 to E874 are polyprenol monophosphomannose synthase.

It in the N-terminal section; belongs to the CN hydrolase family. Apolipoprotein N-acyltransferase subfamily. This sequence in the C-terminal section; belongs to the glycosyltransferase 2 family.

The protein resides in the cell membrane. It carries out the reaction N-terminal S-1,2-diacyl-sn-glyceryl-L-cysteinyl-[lipoprotein] + a glycerophospholipid = N-acyl-S-1,2-diacyl-sn-glyceryl-L-cysteinyl-[lipoprotein] + a 2-acyl-sn-glycero-3-phospholipid + H(+). The enzyme catalyses a di-trans,poly-cis-dolichyl phosphate + GDP-alpha-D-mannose = a di-trans,poly-cis-dolichyl beta-D-mannosyl phosphate + GDP. It participates in protein modification; lipoprotein biosynthesis (N-acyl transfer). In terms of biological role, catalyzes the phospholipid dependent N-acylation of the N-terminal cysteine of apolipoprotein, the last step in lipoprotein maturation. Functionally, transfers mannose from GDP-mannose to lipid acceptors to form polyprenol monophosphomannose (PPM). PMM is an alkai-stable sugar donor which adds mannose-phosphate residues to triacylated-phosphatidyl-myo-inositol mannosides (PIM2), eventually leading to generation of the cell wall glycolipid lipoglycan modulins lipoarabinomannan (LAM) and lipomannan (LM). This chain is Bifunctional apolipoprotein N-acyltransferase/polyprenol monophosphomannose synthase, found in Mycobacterium bovis (strain BCG / Pasteur 1173P2).